A 107-amino-acid chain; its full sequence is uncharacterized protein (107 aa).

The protein localises to the mitochondrion. This is an uncharacterized protein from Arabidopsis thaliana (Mouse-ear cress).